A 104-amino-acid polypeptide reads, in one-letter code: Pterin-4-alpha-carbinolamine dehydratase (104 aa).

N-acetylalanine is present on Ala-2. Substrate is bound by residues Asp-61–His-63 and Ser-78–Glu-81.

The protein belongs to the pterin-4-alpha-carbinolamine dehydratase family. Homotetramer and homodimer. Heterotetramer with HNF1A; formed by a dimer of dimers. Interacts with HNF1B (via HNF-p1 domain); the interaction increases HNF1B transactivation activity.

The protein localises to the cytoplasm. The protein resides in the nucleus. The enzyme catalyses (4aS,6R)-4a-hydroxy-L-erythro-5,6,7,8-tetrahydrobiopterin = (6R)-L-erythro-6,7-dihydrobiopterin + H2O. Functionally, involved in tetrahydrobiopterin biosynthesis. Seems to both prevent the formation of 7-pterins and accelerate the formation of quinonoid-BH2. Coactivator for HNF1A-dependent transcription. Regulates the dimerization of homeodomain protein HNF1A and enhances its transcriptional activity. Also acts as a coactivator for HNF1B-dependent transcription. This is Pterin-4-alpha-carbinolamine dehydratase (PCBD1) from Bos taurus (Bovine).